We begin with the raw amino-acid sequence, 197 residues long: Adenylate kinase (197 aa).

16–21 (GAGKGT) provides a ligand contact to ATP. Residues 36–65 (STGDILRDHVARGTALGQRVKPILDAGQLV) are NMP. AMP contacts are provided by residues Thr-37, Arg-42, 63 to 65 (QLV), 90 to 93 (GFPR), and Gln-97. The tract at residues 131–147 (ERGRQAALRGEPVRSDD) is LID. ATP is bound at residue Arg-132. Positions 144 and 155 each coordinate AMP. Gly-183 contributes to the ATP binding site.

This sequence belongs to the adenylate kinase family. In terms of assembly, monomer.

Its subcellular location is the cytoplasm. The enzyme catalyses AMP + ATP = 2 ADP. It functions in the pathway purine metabolism; AMP biosynthesis via salvage pathway; AMP from ADP: step 1/1. In terms of biological role, catalyzes the reversible transfer of the terminal phosphate group between ATP and AMP. Plays an important role in cellular energy homeostasis and in adenine nucleotide metabolism. The polypeptide is Adenylate kinase (Deinococcus geothermalis (strain DSM 11300 / CIP 105573 / AG-3a)).